A 188-amino-acid polypeptide reads, in one-letter code: dCTP deaminase (188 aa).

DCTP is bound at residue 109-114 (KSTYAR). The Proton donor/acceptor role is filled by Glu-135. DCTP contacts are provided by Gln-154, Tyr-168, and Gln-178.

This sequence belongs to the dCTP deaminase family. As to quaternary structure, homotrimer.

It carries out the reaction dCTP + H2O + H(+) = dUTP + NH4(+). It functions in the pathway pyrimidine metabolism; dUMP biosynthesis; dUMP from dCTP (dUTP route): step 1/2. In terms of biological role, catalyzes the deamination of dCTP to dUTP. This is dCTP deaminase from Helicobacter pylori (strain G27).